The sequence spans 144 residues: Fluoride-specific ion channel FluC (144 aa).

A run of 4 helical transmembrane segments spans residues 7–27 (LIVM…SVAA), 33–53 (FIPW…IGFF), 71–91 (LFVM…SLQT), and 105–125 (VNVA…HITA). Residues glycine 79 and threonine 82 each contribute to the Na(+) site.

It belongs to the fluoride channel Fluc/FEX (TC 1.A.43) family.

It is found in the cell inner membrane. The catalysed reaction is fluoride(in) = fluoride(out). Its activity is regulated as follows. Na(+) is not transported, but it plays an essential structural role and its presence is essential for fluoride channel function. Fluoride-specific ion channel. Important for reducing fluoride concentration in the cell, thus reducing its toxicity. The protein is Fluoride-specific ion channel FluC of Gluconobacter oxydans (strain 621H) (Gluconobacter suboxydans).